The following is a 546-amino-acid chain: ATP synthase subunit alpha (546 aa).

173 to 180 (GDRQTGKT) contributes to the ATP binding site. Residues 520-546 (VDKKTAPKSVTPVDQEQIKAGKAQEKK) are disordered. The span at 535–546 (EQIKAGKAQEKK) shows a compositional bias: basic and acidic residues.

Belongs to the ATPase alpha/beta chains family. F-type ATPases have 2 components, CF(1) - the catalytic core - and CF(0) - the membrane proton channel. CF(1) has five subunits: alpha(3), beta(3), gamma(1), delta(1), epsilon(1). CF(0) has three main subunits: a(1), b(2) and c(9-12). The alpha and beta chains form an alternating ring which encloses part of the gamma chain. CF(1) is attached to CF(0) by a central stalk formed by the gamma and epsilon chains, while a peripheral stalk is formed by the delta and b chains.

Its subcellular location is the cell membrane. It catalyses the reaction ATP + H2O + 4 H(+)(in) = ADP + phosphate + 5 H(+)(out). Its function is as follows. Produces ATP from ADP in the presence of a proton gradient across the membrane. The alpha chain is a regulatory subunit. This is ATP synthase subunit alpha from Bifidobacterium animalis subsp. lactis (strain AD011).